The primary structure comprises 335 residues: Ketol-acid reductoisomerase (NADP(+)) (335 aa).

Positions 2 to 182 (VEMFYDKDAD…GCTRAGVIET (181 aa)) constitute a KARI N-terminal Rossmann domain. Residues 25-28 (YGSQ), Arg-48, Ser-51, and 83-86 (DEIQ) contribute to the NADP(+) site. His-108 is an active-site residue. Gly-134 lines the NADP(+) pocket. The 146-residue stretch at 183–328 (TFREETETDL…KKLRAMMPWL (146 aa)) folds into the KARI C-terminal knotted domain. Mg(2+) contacts are provided by Asp-191, Glu-195, Glu-227, and Glu-231. Ser-252 is a binding site for substrate.

This sequence belongs to the ketol-acid reductoisomerase family. Mg(2+) is required as a cofactor.

It carries out the reaction (2R)-2,3-dihydroxy-3-methylbutanoate + NADP(+) = (2S)-2-acetolactate + NADPH + H(+). The catalysed reaction is (2R,3R)-2,3-dihydroxy-3-methylpentanoate + NADP(+) = (S)-2-ethyl-2-hydroxy-3-oxobutanoate + NADPH + H(+). Its pathway is amino-acid biosynthesis; L-isoleucine biosynthesis; L-isoleucine from 2-oxobutanoate: step 2/4. It functions in the pathway amino-acid biosynthesis; L-valine biosynthesis; L-valine from pyruvate: step 2/4. Involved in the biosynthesis of branched-chain amino acids (BCAA). Catalyzes an alkyl-migration followed by a ketol-acid reduction of (S)-2-acetolactate (S2AL) to yield (R)-2,3-dihydroxy-isovalerate. In the isomerase reaction, S2AL is rearranged via a Mg-dependent methyl migration to produce 3-hydroxy-3-methyl-2-ketobutyrate (HMKB). In the reductase reaction, this 2-ketoacid undergoes a metal-dependent reduction by NADPH to yield (R)-2,3-dihydroxy-isovalerate. In Methanococcoides burtonii (strain DSM 6242 / NBRC 107633 / OCM 468 / ACE-M), this protein is Ketol-acid reductoisomerase (NADP(+)).